Consider the following 219-residue polypeptide: DnaJ homolog subfamily C member 30, mitochondrial (219 aa).

A mitochondrion-targeting transit peptide spans 1–38 (MAAARCLGWTLSPLWRWWQVRGLPPSSATGLCSRGRTY). In terms of domain architecture, J spans 42-107 (ALYELLGVPS…ILRRKYDRGL (66 aa)). Residues 109–148 (SDQDLRGPGVKPSKTPVADPAPPRPPPYTPRAPGGSRASP) are disordered. The span at 127–138 (DPAPPRPPPYTP) shows a compositional bias: pro residues. The chain crosses the membrane as a helical span at residues 202–218 (ATFFVVLFLIFVFVGFR).

As to quaternary structure, associates with the ATP synthase complex. Interacts with MT-ATP6; interaction is direct. Interacts with ATP5MC2; interaction is direct. In terms of tissue distribution, in brain, expressed in gray matter structures.

It is found in the mitochondrion inner membrane. Functionally, mitochondrial protein enriched in neurons that acts as a regulator of mitochondrial respiration. Associates with the ATP synthase complex and facilitates ATP synthesis. May be a chaperone protein involved in the turnover of the subunits of mitochondrial complex I N-module. It facilitates the degradation of N-module subunits damaged by oxidative stress, and contributes to complex I functional efficiency. This is DnaJ homolog subfamily C member 30, mitochondrial from Mus musculus (Mouse).